We begin with the raw amino-acid sequence, 388 residues long: MLLLFLLFEGLCCPGENTAAPQALQSYHLAAEEQLSFRMLQTSSFANHSWAHSEGSGWLGDLQTHGWDTVLGTIRFLKPWSHGNFSKQELKNLQSLFQLYFHSFIQIVQASAGQFQLEYPFEIQILAGCRMNAPQIFLNMAYQGSDFLSFQGISWEPSPGAGIRAQNICKVLNRYLDIKEILQSLLGHTCPRFLAGLMEAGESELKRKVKPEAWLSCGPSPGPGRLQLVCHVSGFYPKPVWVMWMRGEQEQRGTQRGDVLPNADETWYLRATLDVAAGEAAGLSCRVKHSSLGGHDLIIHWGGYSIFLILICLTVIVTLVILVVVDSRLKKQSSNKNILSPHTPSPVFLMGANTQDTKNSRHQFCLAQVSWIKNRVLKKWKTRLNQLW.

A signal peptide spans 1-19 (MLLLFLLFEGLCCPGENTA). The propeptide at 20–31 (APQALQSYHLAA) is removed in sCD1e. 2 N-linked (GlcNAc...) asparagine glycosylation sites follow: Asn-47 and Asn-84. In terms of domain architecture, Ig-like spans 191-301 (PRFLAGLMEA…LGGHDLIIHW (111 aa)). A disulfide bond links Cys-230 and Cys-285. A helical membrane pass occupies residues 305-325 (SIFLILICLTVIVTLVILVVV).

Heterodimer with B2M (beta-2-microglobulin). The association with B2M appears to be facilitated by the presence of the propeptide. Mono-ubiquitinated. Post-translationally, proteolytically cleaved in late endosomes to yield a soluble form. In terms of tissue distribution, expressed on cortical thymocytes, dendritic cells, Langerhans cells, on certain T-cell leukemias, and in various other tissues.

The protein localises to the golgi apparatus membrane. It localises to the early endosome. Its subcellular location is the late endosome. It is found in the lysosome lumen. Its function is as follows. T-cell surface glycoprotein CD1e, soluble binds diacetylated lipids, including phosphatidyl inositides and diacylated sulfoglycolipids, and is required for the presentation of glycolipid antigens on the cell surface. The membrane-associated form is not active. The protein is T-cell surface glycoprotein CD1e, membrane-associated (CD1E) of Homo sapiens (Human).